Reading from the N-terminus, the 307-residue chain is Streptomycin 6-kinase (307 aa).

133–145 (LAGLLARLVSVPA) contacts streptomycin. Asp-201 functions as the Proton acceptor in the catalytic mechanism.

Belongs to the aminoglycoside phosphotransferase family.

It catalyses the reaction streptomycin + ATP = streptomycin 6-phosphate + ADP + H(+). In terms of biological role, the aminoglycoside phosphotransferases achieve inactivation of their antibiotic substrates by phosphorylation. The sequence is that of Streptomycin 6-kinase (sph) from Streptomyces glaucescens.